Consider the following 218-residue polypeptide: Small ribosomal subunit protein uS3c (218 aa).

The region spanning 47–118 is the KH type-2 domain; it reads VQKHMRISSG…RLNIAIARVP (72 aa).

Belongs to the universal ribosomal protein uS3 family. Part of the 30S ribosomal subunit.

Its subcellular location is the plastid. It localises to the chloroplast. The chain is Small ribosomal subunit protein uS3c (rps3) from Nuphar advena (Common spatterdock).